Consider the following 340-residue polypeptide: Protein-arginine kinase (340 aa).

One can recognise a Phosphagen kinase C-terminal domain in the interval 21-242 (VVLSSRIRLA…EQIIMQERVA (222 aa)). ATP-binding positions include 24–28 (SSRIR), His-79, Arg-113, 164–168 (RASVM), and 195–200 (RGIYGE).

It belongs to the ATP:guanido phosphotransferase family.

The catalysed reaction is L-arginyl-[protein] + ATP = N(omega)-phospho-L-arginyl-[protein] + ADP + H(+). Functionally, catalyzes the specific phosphorylation of arginine residues in proteins. The polypeptide is Protein-arginine kinase (Listeria monocytogenes serotype 4b (strain F2365)).